A 98-amino-acid polypeptide reads, in one-letter code: NADH-ubiquinone oxidoreductase chain 4L (98 aa).

3 helical membrane-spanning segments follow: residues M1 to V21, S29 to L49, and I58 to L78.

This sequence belongs to the complex I subunit 4L family. Core subunit of respiratory chain NADH dehydrogenase (Complex I) which is composed of 45 different subunits.

Its subcellular location is the mitochondrion inner membrane. The enzyme catalyses a ubiquinone + NADH + 5 H(+)(in) = a ubiquinol + NAD(+) + 4 H(+)(out). Functionally, core subunit of the mitochondrial membrane respiratory chain NADH dehydrogenase (Complex I) which catalyzes electron transfer from NADH through the respiratory chain, using ubiquinone as an electron acceptor. Part of the enzyme membrane arm which is embedded in the lipid bilayer and involved in proton translocation. In Pongo abelii (Sumatran orangutan), this protein is NADH-ubiquinone oxidoreductase chain 4L (MT-ND4L).